The primary structure comprises 134 residues: Phosphoribosyl-AMP cyclohydrolase (134 aa).

D78 contributes to the Mg(2+) binding site. Residue C79 participates in Zn(2+) binding. Mg(2+) contacts are provided by D80 and D82. Positions 96 and 103 each coordinate Zn(2+).

It belongs to the PRA-CH family. In terms of assembly, homodimer. Mg(2+) is required as a cofactor. The cofactor is Zn(2+).

The protein resides in the cytoplasm. It catalyses the reaction 1-(5-phospho-beta-D-ribosyl)-5'-AMP + H2O = 1-(5-phospho-beta-D-ribosyl)-5-[(5-phospho-beta-D-ribosylamino)methylideneamino]imidazole-4-carboxamide. The protein operates within amino-acid biosynthesis; L-histidine biosynthesis; L-histidine from 5-phospho-alpha-D-ribose 1-diphosphate: step 3/9. Functionally, catalyzes the hydrolysis of the adenine ring of phosphoribosyl-AMP. This is Phosphoribosyl-AMP cyclohydrolase from Cupriavidus necator (strain ATCC 17699 / DSM 428 / KCTC 22496 / NCIMB 10442 / H16 / Stanier 337) (Ralstonia eutropha).